Consider the following 440-residue polypeptide: Protein disulfide-isomerase A6 (440 aa).

Positions 1–19 are cleaved as a signal peptide; it reads MARLVLGLVSCTFFLAVSG. 2 Thioredoxin domains span residues 20–133 and 151–287; these read LYSS…ALRQ and QGRG…EDIA. A disulfide bond links cysteine 55 and cysteine 58. Phosphoserine is present on residues serine 129, serine 156, and serine 158. The tract at residues 139-161 is disordered; the sequence is LGGRSGGYSSGKQGRGDSSSKKD. Basic and acidic residues predominate over residues 152 to 161; that stretch reads GRGDSSSKKD. Cysteine 190 and cysteine 193 are joined by a disulfide. Residues 399–440 form a disordered region; sequence GGGSFPTITPREPWDGKDGELPVEDDIDLSDVELDDLEKDEL. Residues 419 to 440 show a composition bias toward acidic residues; the sequence is LPVEDDIDLSDVELDDLEKDEL. The residue at position 428 (serine 428) is a Phosphoserine. The Prevents secretion from ER motif lies at 437 to 440; sequence KDEL.

The protein belongs to the protein disulfide isomerase family. As to quaternary structure, part of a large chaperone multiprotein complex comprising DNAJB11, HSP90B1, HSPA5, HYOU, PDIA2, PDIA4, PDIA6, PPIB, SDF2L1, UGGT1 and very small amounts of ERP29, but not, or at very low levels, CALR nor CANX. Interacts with MICA on the surface of tumor cells, leading to MICA disulfide bond reduction which is required for its release from tumor cells. Interacts with ITGB3 following platelet stimulation. Interacts with ERN1; the interaction is direct. Interacts with EIF2AK3.

The protein resides in the endoplasmic reticulum lumen. The protein localises to the cell membrane. It localises to the melanosome. It catalyses the reaction Catalyzes the rearrangement of -S-S- bonds in proteins.. Its function is as follows. May function as a chaperone that inhibits aggregation of misfolded proteins. Negatively regulates the unfolded protein response (UPR) through binding to UPR sensors such as ERN1, which in turn inactivates ERN1 signaling. May also regulate the UPR via the EIF2AK3 UPR sensor. Plays a role in platelet aggregation and activation by agonists such as convulxin, collagen and thrombin. The chain is Protein disulfide-isomerase A6 (Pdia6) from Mus musculus (Mouse).